The sequence spans 146 residues: D-aminoacyl-tRNA deacylase (146 aa).

The short motif at Gly-137–Pro-138 is the Gly-cisPro motif, important for rejection of L-amino acids element.

This sequence belongs to the DTD family. Homodimer.

The protein localises to the cytoplasm. The enzyme catalyses glycyl-tRNA(Ala) + H2O = tRNA(Ala) + glycine + H(+). It carries out the reaction a D-aminoacyl-tRNA + H2O = a tRNA + a D-alpha-amino acid + H(+). In terms of biological role, an aminoacyl-tRNA editing enzyme that deacylates mischarged D-aminoacyl-tRNAs. Also deacylates mischarged glycyl-tRNA(Ala), protecting cells against glycine mischarging by AlaRS. Acts via tRNA-based rather than protein-based catalysis; rejects L-amino acids rather than detecting D-amino acids in the active site. By recycling D-aminoacyl-tRNA to D-amino acids and free tRNA molecules, this enzyme counteracts the toxicity associated with the formation of D-aminoacyl-tRNA entities in vivo and helps enforce protein L-homochirality. The chain is D-aminoacyl-tRNA deacylase from Bacillus cytotoxicus (strain DSM 22905 / CIP 110041 / 391-98 / NVH 391-98).